The sequence spans 518 residues: Protein nucleotidyltransferase YdiU (518 aa).

Basic and acidic residues predominate over residues M1–L10. Residues M1 to R23 form a disordered region. ATP-binding residues include G100, G102, R103, K123, D135, G136, R193, and R200. D270 serves as the catalytic Proton acceptor. N271 and D280 together coordinate Mg(2+). D280 provides a ligand contact to ATP.

It belongs to the SELO family. It depends on Mg(2+) as a cofactor. Mn(2+) serves as cofactor.

The enzyme catalyses L-seryl-[protein] + ATP = 3-O-(5'-adenylyl)-L-seryl-[protein] + diphosphate. It carries out the reaction L-threonyl-[protein] + ATP = 3-O-(5'-adenylyl)-L-threonyl-[protein] + diphosphate. The catalysed reaction is L-tyrosyl-[protein] + ATP = O-(5'-adenylyl)-L-tyrosyl-[protein] + diphosphate. It catalyses the reaction L-histidyl-[protein] + UTP = N(tele)-(5'-uridylyl)-L-histidyl-[protein] + diphosphate. The enzyme catalyses L-seryl-[protein] + UTP = O-(5'-uridylyl)-L-seryl-[protein] + diphosphate. It carries out the reaction L-tyrosyl-[protein] + UTP = O-(5'-uridylyl)-L-tyrosyl-[protein] + diphosphate. Functionally, nucleotidyltransferase involved in the post-translational modification of proteins. It can catalyze the addition of adenosine monophosphate (AMP) or uridine monophosphate (UMP) to a protein, resulting in modifications known as AMPylation and UMPylation. In Xanthomonas campestris pv. campestris (strain B100), this protein is Protein nucleotidyltransferase YdiU.